The following is a 140-amino-acid chain: Sex-regulated protein janus-B (140 aa).

Arginine 42 is a binding site for substrate. The active-site Proton acceptor is histidine 69. Position 110–112 (110–112 (SRT)) interacts with substrate.

This sequence belongs to the janus family.

In terms of biological role, janA and janB regulate somatic sex differentiation. In Drosophila teissieri (Fruit fly), this protein is Sex-regulated protein janus-B (janB).